We begin with the raw amino-acid sequence, 195 residues long: Imidazoleglycerol-phosphate dehydratase (195 aa).

This sequence belongs to the imidazoleglycerol-phosphate dehydratase family.

The protein localises to the cytoplasm. The enzyme catalyses D-erythro-1-(imidazol-4-yl)glycerol 3-phosphate = 3-(imidazol-4-yl)-2-oxopropyl phosphate + H2O. The protein operates within amino-acid biosynthesis; L-histidine biosynthesis; L-histidine from 5-phospho-alpha-D-ribose 1-diphosphate: step 6/9. In Cereibacter sphaeroides (strain ATCC 17025 / ATH 2.4.3) (Rhodobacter sphaeroides), this protein is Imidazoleglycerol-phosphate dehydratase.